A 76-amino-acid polypeptide reads, in one-letter code: U-scoloptoxin(15)-Ssd3b (76 aa).

An N-terminal signal peptide occupies residues 1 to 23; the sequence is MEKKIIFLCFLVALLTFPEFISS.

In terms of processing, contains 2 disulfide bonds. As to expression, expressed by the venom gland.

It is found in the secreted. In Scolopendra dehaani (Thai centipede), this protein is U-scoloptoxin(15)-Ssd3b.